A 228-amino-acid chain; its full sequence is Ribose-5-phosphate isomerase A (228 aa).

Residues 29–32, 85–88, and 98–101 contribute to the substrate site; these read TGST, DGAD, and KGGG. Residue glutamate 107 is the Proton acceptor of the active site. Residue lysine 125 participates in substrate binding.

It belongs to the ribose 5-phosphate isomerase family. In terms of assembly, homodimer.

It carries out the reaction aldehydo-D-ribose 5-phosphate = D-ribulose 5-phosphate. It functions in the pathway carbohydrate degradation; pentose phosphate pathway; D-ribose 5-phosphate from D-ribulose 5-phosphate (non-oxidative stage): step 1/1. Functionally, catalyzes the reversible conversion of ribose-5-phosphate to ribulose 5-phosphate. The protein is Ribose-5-phosphate isomerase A of Staphylococcus aureus (strain COL).